The sequence spans 404 residues: 8-amino-7-oxononanoate synthase (404 aa).

Position 20 (Arg20) interacts with substrate. Position 116 to 117 (116 to 117 (GY)) interacts with pyridoxal 5'-phosphate. His141 serves as a coordination point for substrate. Pyridoxal 5'-phosphate contacts are provided by Ser187, His215, and Thr243. At Lys246 the chain carries N6-(pyridoxal phosphate)lysine. Thr366 is a substrate binding site.

This sequence belongs to the class-II pyridoxal-phosphate-dependent aminotransferase family. BioF subfamily. In terms of assembly, homodimer. The cofactor is pyridoxal 5'-phosphate.

The enzyme catalyses 6-carboxyhexanoyl-[ACP] + L-alanine + H(+) = (8S)-8-amino-7-oxononanoate + holo-[ACP] + CO2. It functions in the pathway cofactor biosynthesis; biotin biosynthesis. In terms of biological role, catalyzes the decarboxylative condensation of pimeloyl-[acyl-carrier protein] and L-alanine to produce 8-amino-7-oxononanoate (AON), [acyl-carrier protein], and carbon dioxide. This chain is 8-amino-7-oxononanoate synthase, found in Cupriavidus necator (strain ATCC 17699 / DSM 428 / KCTC 22496 / NCIMB 10442 / H16 / Stanier 337) (Ralstonia eutropha).